The primary structure comprises 142 residues: Ribosome-binding factor A (142 aa).

A disordered region spans residues E119–T142. Positions E123–T142 are enriched in polar residues.

The protein belongs to the RbfA family. In terms of assembly, monomer. Binds 30S ribosomal subunits, but not 50S ribosomal subunits or 70S ribosomes.

The protein localises to the cytoplasm. In terms of biological role, one of several proteins that assist in the late maturation steps of the functional core of the 30S ribosomal subunit. Associates with free 30S ribosomal subunits (but not with 30S subunits that are part of 70S ribosomes or polysomes). Required for efficient processing of 16S rRNA. May interact with the 5'-terminal helix region of 16S rRNA. This Prochlorococcus marinus (strain MIT 9303) protein is Ribosome-binding factor A.